Reading from the N-terminus, the 503-residue chain is Glycerol kinase (503 aa).

Thr12 contributes to the ADP binding site. ATP contacts are provided by Thr12, Thr13, and Ser14. Sn-glycerol 3-phosphate is bound at residue Thr12. Arg16 serves as a coordination point for ADP. Arg82, Glu83, Tyr134, and Asp243 together coordinate sn-glycerol 3-phosphate. Residues Arg82, Glu83, Tyr134, Asp243, and Gln244 each contribute to the glycerol site. Residues Thr265 and Gly308 each contribute to the ADP site. Residues Thr265, Gly308, Gln312, and Gly412 each coordinate ATP. Position 412 (Gly412) interacts with ADP.

Belongs to the FGGY kinase family.

It carries out the reaction glycerol + ATP = sn-glycerol 3-phosphate + ADP + H(+). It participates in polyol metabolism; glycerol degradation via glycerol kinase pathway; sn-glycerol 3-phosphate from glycerol: step 1/1. With respect to regulation, inhibited by fructose 1,6-bisphosphate (FBP). Key enzyme in the regulation of glycerol uptake and metabolism. Catalyzes the phosphorylation of glycerol to yield sn-glycerol 3-phosphate. This chain is Glycerol kinase, found in Nitrobacter hamburgensis (strain DSM 10229 / NCIMB 13809 / X14).